A 285-amino-acid polypeptide reads, in one-letter code: Sulfotransferase 2A1 (285 aa).

The 3'-phosphoadenylyl sulfate site is built by Lys44, Ser45, Gly46, Thr47, Asn48, and Trp49. The active-site Proton acceptor is the His99. Positions 121, 129, 184, 218, 223, 247, 248, and 249 each coordinate 3'-phosphoadenylyl sulfate. Residue Ser251 is modified to Phosphoserine.

The protein belongs to the sulfotransferase 1 family. As to quaternary structure, homodimer. As to expression, predominanly expressed in liver. Detected also in adrenal gland and in jejunum.

It localises to the cytoplasm. The protein resides in the cytosol. The catalysed reaction is an alcohol + 3'-phosphoadenylyl sulfate = an alkyl sulfate + adenosine 3',5'-bisphosphate + H(+). The enzyme catalyses 3beta-hydroxyandrost-5-en-17-one + 3'-phosphoadenylyl sulfate = dehydroepiandrosterone 3-sulfate + adenosine 3',5'-bisphosphate + H(+). It catalyses the reaction taurolithocholate + 3'-phosphoadenylyl sulfate = taurolithocholate 3-sulfate + adenosine 3',5'-bisphosphate + H(+). It carries out the reaction lithocholate + 3'-phosphoadenylyl sulfate = lithocholate sulfate + adenosine 3',5'-bisphosphate + H(+). The catalysed reaction is (24S)-hydroxycholesterol + 3'-phosphoadenylyl sulfate = (24S)-hydroxycholesterol 24-sulfate + adenosine 3',5'-bisphosphate + H(+). The enzyme catalyses (24S)-hydroxycholesterol + 3'-phosphoadenylyl sulfate = (24S)-hydroxycholesterol 3-sulfate + adenosine 3',5'-bisphosphate + H(+). It catalyses the reaction (24S)-hydroxycholesterol 24-sulfate + 3'-phosphoadenylyl sulfate = (24S)-hydroxycholesterol 3,24-disulfate + adenosine 3',5'-bisphosphate + H(+). It carries out the reaction pregnenolone + 3'-phosphoadenylyl sulfate = pregnenolone sulfate + adenosine 3',5'-bisphosphate + H(+). The catalysed reaction is androsterone + 3'-phosphoadenylyl sulfate = androsterone 3alpha-sulfate + adenosine 3',5'-bisphosphate + H(+). Sulfotransferase that utilizes 3'-phospho-5'-adenylyl sulfate (PAPS) as sulfonate donor to catalyze the sulfonation of steroids and bile acids in the liver and adrenal glands. Mediates the sulfation of a wide range of steroids and sterols, including pregnenolone, androsterone, DHEA, bile acids, cholesterol and as well many xenobiotics that contain alcohol and phenol functional groups. Sulfonation increases the water solubility of most compounds, and therefore their renal excretion, but it can also result in bioactivation to form active metabolites. Plays an important role in maintening steroid and lipid homeostasis. Plays a key role in bile acid metabolism. In addition, catalyzes the metabolic activation of potent carcinogenic polycyclic arylmethanols. The chain is Sulfotransferase 2A1 (SULT2A1) from Macaca fascicularis (Crab-eating macaque).